The chain runs to 299 residues: Putative activator of 90 kDa heat shock protein ATPase homolog 2 (299 aa).

This sequence belongs to the AHA1 family.

In terms of biological role, co-chaperone that stimulates HSP90 ATPase activity. This is Putative activator of 90 kDa heat shock protein ATPase homolog 2 from Homo sapiens (Human).